We begin with the raw amino-acid sequence, 145 residues long: Actin-depolymerizing factor 2 (145 aa).

The ADF-H domain occupies 13–145; that stretch reads GMGVAPDIRD…DLEVLRERAH (133 aa).

Belongs to the actin-binding proteins ADF family.

Its function is as follows. Actin-depolymerizing protein. Severs actin filaments (F-actin) and binds to actin monomers. This Oryza sativa subsp. japonica (Rice) protein is Actin-depolymerizing factor 2 (ADF2).